Consider the following 497-residue polypeptide: Glycerol kinase (497 aa).

An ADP-binding site is contributed by threonine 11. ATP-binding residues include threonine 11, serine 12, and serine 13. Threonine 11 contributes to the sn-glycerol 3-phosphate binding site. Arginine 15 is a binding site for ADP. Residues arginine 81, glutamate 82, tyrosine 133, and aspartate 242 each contribute to the sn-glycerol 3-phosphate site. Glycerol contacts are provided by arginine 81, glutamate 82, tyrosine 133, aspartate 242, and glutamine 243. Positions 264 and 307 each coordinate ADP. 4 residues coordinate ATP: threonine 264, glycine 307, glutamine 311, and glycine 412. Positions 412 and 416 each coordinate ADP.

This sequence belongs to the FGGY kinase family.

It carries out the reaction glycerol + ATP = sn-glycerol 3-phosphate + ADP + H(+). Its pathway is polyol metabolism; glycerol degradation via glycerol kinase pathway; sn-glycerol 3-phosphate from glycerol: step 1/1. With respect to regulation, inhibited by fructose 1,6-bisphosphate (FBP). In terms of biological role, key enzyme in the regulation of glycerol uptake and metabolism. Catalyzes the phosphorylation of glycerol to yield sn-glycerol 3-phosphate. In Variovorax paradoxus (strain S110), this protein is Glycerol kinase.